Reading from the N-terminus, the 568-residue chain is 3-(3-hydroxy-phenyl)propionate/3-hydroxycinnamic acid hydroxylase (568 aa).

FAD is bound by residues 13-42 and 278-288; these read DVVI…IVEE and FRKGRMFLAGD.

This sequence belongs to the PheA/TfdB FAD monooxygenase family. The cofactor is FAD.

It catalyses the reaction 3-(3-hydroxyphenyl)propanoate + NADH + O2 + H(+) = 3-(2,3-dihydroxyphenyl)propanoate + NAD(+) + H2O. The catalysed reaction is (2E)-3-(3-hydroxyphenyl)prop-2-enoate + NADH + O2 + H(+) = (2E)-3-(2,3-dihydroxyphenyl)prop-2-enoate + NAD(+) + H2O. Its pathway is aromatic compound metabolism; 3-phenylpropanoate degradation. Functionally, catalyzes the insertion of one atom of molecular oxygen into position 2 of the phenyl ring of 3-(3-hydroxyphenyl)propionate (3-HPP) and hydroxycinnamic acid (3HCI). In Mycobacterium sp. (strain JLS), this protein is 3-(3-hydroxy-phenyl)propionate/3-hydroxycinnamic acid hydroxylase.